The chain runs to 329 residues: DNA polymerase III subunit delta' (329 aa).

Component of the DNA clamp loading complex consisting of tau(3):delta(1):delta'(1). The DNA polymerase III holoenzyme complex contains at least 10 different subunits organized into 3 functionally essential subassemblies: the Pol III core, the beta sliding clamp processivity factor and the clamp-loading complex. The Pol III core (subunits alpha, epsilon and theta) contains the polymerase and the 3'-5' exonuclease proofreading activities. The polymerase is tethered to the template via the dimeric beta sliding clamp processivity factor. The DNA clamp-loading complex assembles the beta sliding clamp onto the primed template and plays a central role in the organization and communication at the replication fork.

It localises to the cytoplasm. Its subcellular location is the nucleoid. It catalyses the reaction DNA(n) + a 2'-deoxyribonucleoside 5'-triphosphate = DNA(n+1) + diphosphate. In terms of biological role, DNA polymerase III is a complex, multichain enzyme responsible for most of the replicative synthesis in bacteria. The sequence is that of DNA polymerase III subunit delta' (holB) from Bacillus subtilis (strain 168).